Here is an 82-residue protein sequence, read N- to C-terminus: Ice-structuring protein B (82 aa).

Residues Met-1–Ala-23 form the signal peptide. The propeptide at Arg-24–Pro-44 is removed by a dipeptidylpeptidase. Arg-81 is subject to Arginine amide.

This sequence belongs to the type-I AFP family. Amidated. As to expression, detected in liver (at protein level).

It is found in the secreted. The protein resides in the extracellular space. In terms of biological role, contributes to protect fish blood from freezing at subzero sea water temperatures. Lowers the blood freezing point. Binds to nascent ice crystals and prevents further growth. In Pseudopleuronectes americanus (Winter flounder), this protein is Ice-structuring protein B.